We begin with the raw amino-acid sequence, 291 residues long: 5-hydroxytryptamine receptor 1D (291 aa).

Residues 30 to 54 form a helical membrane-spanning segment; sequence LCDIWLSSDITCCTASILHLCVIAL. A disulfide bridge connects residues C31 and C108. Positions 38 and 42 each coordinate serotonin. The DRY motif; important for ligand-induced conformation changes motif lies at 55-57; it reads DRY. A helical membrane pass occupies residues 75–96; it reads AAAMIAIVWAISICISIPPLFW. A glycan (N-linked (GlcNAc...) asparagine) is linked at N111. The next 3 helical transmembrane spans lie at 115-138, 221-246, and 256-279; these read ISYT…ILYG, KTLG…VLPI, and ALFD…YTVF. Serotonin is bound at residue S241. The NPxxY motif; important for ligand-induced conformation changes and signaling signature appears at 272–276; it reads NPIIY.

Belongs to the G-protein coupled receptor 1 family. Homodimer. Heterodimer with HTR1B.

It localises to the cell membrane. G-protein coupled receptor for 5-hydroxytryptamine (serotonin). Also functions as a receptor for ergot alkaloid derivatives, various anxiolytic and antidepressant drugs and other psychoactive substances. Ligand binding causes a conformation change that triggers signaling via guanine nucleotide-binding proteins (G proteins) and modulates the activity of downstream effectors, such as adenylate cyclase. HTR1D is coupled to G(i)/G(o) G alpha proteins and mediates inhibitory neurotransmission by inhibiting adenylate cyclase activity. Regulates the release of 5-hydroxytryptamine in the brain, and thereby affects neural activity. May also play a role in regulating the release of other neurotransmitters. May play a role in vasoconstriction. This is 5-hydroxytryptamine receptor 1D (HTR1D) from Sus scrofa (Pig).